The sequence spans 523 residues: 2-isopropylmalate synthase (523 aa).

Positions Val-5 to Trp-267 constitute a Pyruvate carboxyltransferase domain. Mn(2+) is bound by residues Asp-14, His-202, His-204, and Asn-238. A regulatory domain region spans residues Arg-392–Val-523.

It belongs to the alpha-IPM synthase/homocitrate synthase family. LeuA type 1 subfamily. As to quaternary structure, homodimer. Mn(2+) is required as a cofactor.

It localises to the cytoplasm. It catalyses the reaction 3-methyl-2-oxobutanoate + acetyl-CoA + H2O = (2S)-2-isopropylmalate + CoA + H(+). The protein operates within amino-acid biosynthesis; L-leucine biosynthesis; L-leucine from 3-methyl-2-oxobutanoate: step 1/4. Functionally, catalyzes the condensation of the acetyl group of acetyl-CoA with 3-methyl-2-oxobutanoate (2-ketoisovalerate) to form 3-carboxy-3-hydroxy-4-methylpentanoate (2-isopropylmalate). In Escherichia coli O81 (strain ED1a), this protein is 2-isopropylmalate synthase.